Here is a 1070-residue protein sequence, read N- to C-terminus: uncharacterized protein (1070 aa).

The region spanning Leu477–Glu523 is the UBA domain.

This is an uncharacterized protein from Sulfolobus islandicus rod-shaped virus 1 (SIRV-1).